A 103-amino-acid chain; its full sequence is Small ribosomal subunit protein uS10 (103 aa).

The protein belongs to the universal ribosomal protein uS10 family. As to quaternary structure, part of the 30S ribosomal subunit.

Functionally, involved in the binding of tRNA to the ribosomes. In Ralstonia pickettii (strain 12J), this protein is Small ribosomal subunit protein uS10.